Reading from the N-terminus, the 406-residue chain is Tyrosine--tRNA ligase (406 aa).

Tyr35 contributes to the L-tyrosine binding site. The 'HIGH' region motif lies at 40–49; that stretch reads PTGPSLHIGH. The L-tyrosine site is built by Tyr168 and Gln172. The 'KMSKS' region signature appears at 228–232; sequence KMGKS. Residue Lys231 participates in ATP binding. Residues 339–405 enclose the S4 RNA-binding domain; that stretch reads IGIIDLFAEA…GKKRFMRIIF (67 aa).

Belongs to the class-I aminoacyl-tRNA synthetase family. TyrS type 1 subfamily. Homodimer.

It is found in the cytoplasm. It catalyses the reaction tRNA(Tyr) + L-tyrosine + ATP = L-tyrosyl-tRNA(Tyr) + AMP + diphosphate + H(+). In terms of biological role, catalyzes the attachment of tyrosine to tRNA(Tyr) in a two-step reaction: tyrosine is first activated by ATP to form Tyr-AMP and then transferred to the acceptor end of tRNA(Tyr). The polypeptide is Tyrosine--tRNA ligase (Treponema denticola (strain ATCC 35405 / DSM 14222 / CIP 103919 / JCM 8153 / KCTC 15104)).